Reading from the N-terminus, the 78-residue chain is TP53-regulated inhibitor of apoptosis 1-A (78 aa).

Residues 1 to 52 (MNSVGEECTDMKRDYDQCFNRWFAEKFLKGAGSGDPCTELFRRYRECVQKAI) are a coiled coil. The CHCH domain occupies 5–55 (GEECTDMKRDYDQCFNRWFAEKFLKGAGSGDPCTELFRRYRECVQKAIKDK). 2 short sequence motifs (cx9C motif) span residues 8–18 (CTDMKRDYDQC) and 37–47 (CTELFRRYREC). 2 disulfides stabilise this stretch: cysteine 8–cysteine 47 and cysteine 18–cysteine 37.

This sequence belongs to the TRIAP1/MDM35 family. In terms of assembly, monomer. Forms a complex with prelid1 in the mitochondrion intermembrane space. Interacts with prelid3a.

It is found in the mitochondrion. The protein resides in the mitochondrion intermembrane space. It carries out the reaction a 1,2-diacyl-sn-glycero-3-phosphate(in) = a 1,2-diacyl-sn-glycero-3-phosphate(out). Involved in the modulation of the mitochondrial apoptotic pathway by ensuring the accumulation of cardiolipin (CL) in mitochondrial membranes. The triap1:prelid1 complex probably functions as a phosphatidic acid (PA) transporter across the mitochondrion intermembrane space to provide PA for cardiolipin CL synthesis in the inner membrane. Likewise, the triap1:prelid3a complex mediates the transfer of phosphatidic acid (PA) between liposomes (in vitro) and probably functions as a PA transporter across the mitochondrion intermembrane space (in vivo). Mediates cell survival by inhibiting activation of caspase-9 which prevents induction of apoptosis. Required for pronephros development; probably involved at an early stage in the formation of pronephric components derived from the somatic layer. This Xenopus laevis (African clawed frog) protein is TP53-regulated inhibitor of apoptosis 1-A (triap1-a).